The following is a 547-amino-acid chain: Hydroxylamine reductase (547 aa).

Cysteine 5, cysteine 8, cysteine 17, and cysteine 23 together coordinate [4Fe-4S] cluster. Hybrid [4Fe-2O-2S] cluster is bound by residues histidine 242, glutamate 266, cysteine 310, cysteine 401, cysteine 429, cysteine 454, glutamate 489, and lysine 491. Cysteine 401 is subject to Cysteine persulfide.

The protein belongs to the HCP family. It depends on [4Fe-4S] cluster as a cofactor. Requires hybrid [4Fe-2O-2S] cluster as cofactor.

The protein localises to the cytoplasm. It catalyses the reaction A + NH4(+) + H2O = hydroxylamine + AH2 + H(+). Functionally, catalyzes the reduction of hydroxylamine to form NH(3) and H(2)O. This Thermoanaerobacter pseudethanolicus (strain ATCC 33223 / 39E) (Clostridium thermohydrosulfuricum) protein is Hydroxylamine reductase.